The primary structure comprises 186 residues: Large ribosomal subunit protein uL10 (186 aa).

The protein belongs to the universal ribosomal protein uL10 family. Part of the ribosomal stalk of the 50S ribosomal subunit. The N-terminus interacts with L11 and the large rRNA to form the base of the stalk. The C-terminus forms an elongated spine to which L12 dimers bind in a sequential fashion forming a multimeric L10(L12)X complex.

In terms of biological role, forms part of the ribosomal stalk, playing a central role in the interaction of the ribosome with GTP-bound translation factors. In Roseiflexus sp. (strain RS-1), this protein is Large ribosomal subunit protein uL10.